The following is a 344-amino-acid chain: MMVIRPVERSDVSELMQLASKTGGGLTSLPANEATLSVRIERAIKTWQGELPKSEQGYVFVLEDSETGTVAGICAIEVAVGLNDPWYNYRVGTLVHASKELNVYNALPTLFLSNDHTGSSELCTLFLDPEWRKEGNGYLLSKSRFMFMAAFRDKFNDKVVAEMRGVIDEHGYSPFWQSLGKRFFSMDFSRADFLCGTGQKAFIAELMPKHPIYTHFLSQEAQDVIGQVHPQTAPARAVLEKEGFRYRNYIDIFDGGPTLECDIDRVRAIRKSRLVEVAEGQPAQGDFPACLVANENYHHFRVVLVRTDPATERLILTAAQLDALKCHAGDRVRLVRLCAEEKTA.

L125 is a succinyl-CoA binding site. The active-site Proton donor is H229.

It belongs to the arginine N-succinyltransferase family.

It catalyses the reaction succinyl-CoA + L-arginine = N(2)-succinyl-L-arginine + CoA + H(+). Its pathway is amino-acid degradation; L-arginine degradation via AST pathway; L-glutamate and succinate from L-arginine: step 1/5. Functionally, catalyzes the transfer of succinyl-CoA to arginine to produce N(2)-succinylarginine. This chain is Arginine N-succinyltransferase, found in Escherichia coli O6:K15:H31 (strain 536 / UPEC).